Here is a 453-residue protein sequence, read N- to C-terminus: Gastrin/cholecystokinin type B receptor (453 aa).

The Extracellular portion of the chain corresponds to 1 to 57 (MELLKLNRSAQGSGAGPGASLCRAGGALLNSSGAGNLSCEPPRLRGAGTRELELAIR). Residues Asn-7, Asn-30, and Asn-36 are each glycosylated (N-linked (GlcNAc...) asparagine). Residues 58–79 (VTLYAVIFLMSVGGNVLIIVVL) traverse the membrane as a helical segment. Residues 80 to 87 (GLSRRLRT) are Cytoplasmic-facing. A helical membrane pass occupies residues 88–109 (VTNAFLLSLAVSDLLLAVACMP). The Extracellular segment spans residues 110 to 131 (FTLLPNLMGTFIFGTVVCKAVS). A disulfide bridge connects residues Cys-127 and Cys-206. A helical membrane pass occupies residues 132 to 150 (YLMGVSVSVSTLSLVAIAL). The Cytoplasmic portion of the chain corresponds to 151-170 (ERYSAICRPLQARVWQTRSH). The helical transmembrane segment at 171–189 (AARVIIATWMLSGLLMVPY) threads the bilayer. The Extracellular segment spans residues 190 to 220 (PVYTAVQPAGGARALQCVHRWPSARVRQTWS). A helical membrane pass occupies residues 221-243 (VLLLLLLFFVPGVVMAVAYGLIS). Residues 244-339 (RELYLGLRFD…KLLAKKRVVR (96 aa)) lie on the Cytoplasmic side of the membrane. A disordered region spans residues 258–286 (SESRVRSQGGLRGGAGPGPAPPNGSCRPE). The helical transmembrane segment at 340–361 (MLLVIVVLFFLCWLPLYSANTW) threads the bilayer. Topologically, residues 362–379 (RAFDSSGAHRALSGAPIS) are extracellular. The helical transmembrane segment at 380 to 400 (FIHLLSYASACVNPLVYCFMH) threads the bilayer. Residues 401–453 (RRFRQACLETCARCCPRPPRARPRPLPDEDPPTPSIASLSRLSYTTISTLGPG) lie on the Cytoplasmic side of the membrane. Cys-414 is lipidated: S-palmitoyl cysteine. A disordered region spans residues 422–453 (RPRPLPDEDPPTPSIASLSRLSYTTISTLGPG). Over residues 435–453 (SIASLSRLSYTTISTLGPG) the composition is skewed to polar residues.

Belongs to the G-protein coupled receptor 1 family. In terms of tissue distribution, parietal cells, pancreas, brain and various neoplastic tissues.

It is found in the cell membrane. In terms of biological role, receptor for gastrin and cholecystokinin. The CCK-B receptors occur throughout the central nervous system where they modulate anxiety, analgesia, arousal, and neuroleptic activity. This receptor mediates its action by association with G proteins that activate a phosphatidylinositol-calcium second messenger system. This is Gastrin/cholecystokinin type B receptor (CCKBR) from Canis lupus familiaris (Dog).